A 416-amino-acid polypeptide reads, in one-letter code: 2-aminoadipate transaminase (416 aa).

Pyridoxal 5'-phosphate is bound by residues 102–103 (GA) and Gln-233. Lys-259 is modified (N6-(pyridoxal phosphate)lysine). Thr-288 contributes to the pyridoxal 5'-phosphate binding site.

The protein belongs to the class-III pyridoxal-phosphate-dependent aminotransferase family. Pyridoxal 5'-phosphate serves as cofactor.

It catalyses the reaction L-2-aminoadipate + 2-oxoglutarate = 2-oxoadipate + L-glutamate. The catalysed reaction is 5-aminopentanoate + 2-oxoglutarate = 5-oxopentanoate + L-glutamate. Its pathway is amino-acid degradation. Its function is as follows. Catalyzes the conversion of 2-aminoadipate (2AA) to 2-oxoadipate (2OA). Is most active on L-2-aminoadipate (L-2AA) and shows only weak activity on the enantiomer, D-2-aminoadipate (D-2AA). Shows moderate activity on 5-aminovalerate (5AVA) and weak activity toward 4-aminobutyrate (GABA). Is involved in a D-lysine catabolic pathway. This Pseudomonas putida (strain ATCC 47054 / DSM 6125 / CFBP 8728 / NCIMB 11950 / KT2440) protein is 2-aminoadipate transaminase.